A 422-amino-acid polypeptide reads, in one-letter code: Serine--tRNA ligase (422 aa).

231–233 (TSE) is a binding site for L-serine. 262 to 264 (RQE) contacts ATP. E285 lines the L-serine pocket. 349 to 352 (EISS) serves as a coordination point for ATP. Residue S384 participates in L-serine binding.

Belongs to the class-II aminoacyl-tRNA synthetase family. Type-1 seryl-tRNA synthetase subfamily. As to quaternary structure, homodimer. The tRNA molecule binds across the dimer.

Its subcellular location is the cytoplasm. The catalysed reaction is tRNA(Ser) + L-serine + ATP = L-seryl-tRNA(Ser) + AMP + diphosphate + H(+). The enzyme catalyses tRNA(Sec) + L-serine + ATP = L-seryl-tRNA(Sec) + AMP + diphosphate + H(+). The protein operates within aminoacyl-tRNA biosynthesis; selenocysteinyl-tRNA(Sec) biosynthesis; L-seryl-tRNA(Sec) from L-serine and tRNA(Sec): step 1/1. Its function is as follows. Catalyzes the attachment of serine to tRNA(Ser). Is also able to aminoacylate tRNA(Sec) with serine, to form the misacylated tRNA L-seryl-tRNA(Sec), which will be further converted into selenocysteinyl-tRNA(Sec). In Mycoplasma capricolum subsp. capricolum (strain California kid / ATCC 27343 / NCTC 10154), this protein is Serine--tRNA ligase.